An 89-amino-acid chain; its full sequence is MAFTAAEKSVIVQEFQRAPGDTGSPEVQVALLTNRINYLTPHFVKHKKDFHSRRGLLRLVNQRRKLLDYLKNTDNERYRTLIERLGLRK.

This sequence belongs to the universal ribosomal protein uS15 family. In terms of assembly, part of the 30S ribosomal subunit. Forms a bridge to the 50S subunit in the 70S ribosome, contacting the 23S rRNA.

Its function is as follows. One of the primary rRNA binding proteins, it binds directly to 16S rRNA where it helps nucleate assembly of the platform of the 30S subunit by binding and bridging several RNA helices of the 16S rRNA. In terms of biological role, forms an intersubunit bridge (bridge B4) with the 23S rRNA of the 50S subunit in the ribosome. In Methylococcus capsulatus (strain ATCC 33009 / NCIMB 11132 / Bath), this protein is Small ribosomal subunit protein uS15.